A 270-amino-acid polypeptide reads, in one-letter code: Peflin (270 aa).

Residues 1 to 97 are disordered; that stretch reads MSYQYGQGYS…YRQQGSAGNV (97 aa). Tandem repeats lie at residues 22–30, 44–54, 62–70, 72–81, and 83–91. Residues 22–91 are 5 X 9 AA approximate tandem repeat of [AP]-P-G-G-P-Y-G-G-P-P; it reads PPRAPYAGGP…QPQGGPYRQQ (70 aa). 2 stretches are compositionally biased toward low complexity: residues 26–47 and 55–66; these read PYAGGPAAGQYGSPYGSAPPGQ and YGSYGQPGPRAP. Residues 67–84 show a composition bias toward gly residues; sequence YGGGQAPGGPYGGYGQPQ. EF-hand domains follow at residues 100 to 135, 141 to 169, 170 to 202, 203 to 239, and 240 to 269; these read GVNPEAYQWFSTVDSDQSGYINAKELKQALMNFNNS, TCIMMLNMFDKTKSGRVDVFGFSALWTFL, QQWRAAFQQFDRDRSGSINTNEMHQALSQMGYN, LSPQFIQELVNRYSVRGGTGVLQLDRFIQVCTQLQSM, and TQAFREKDTGMTGNVRMSYEDFLSSAITRL. Ca(2+)-binding residues include Asp-113, Asp-115, Ser-117, Tyr-119, and Glu-124. Ca(2+) is bound by residues Asp-180, Asp-182, Ser-184, Ser-186, and Glu-191.

Heterodimer; heterodimerizes (via the EF-hand 5) with pdcd6.

The protein resides in the cytoplasm. It is found in the endoplasmic reticulum. The protein localises to the membrane. Its subcellular location is the cytoplasmic vesicle. It localises to the COPII-coated vesicle membrane. Functionally, calcium-binding protein that acts as an adapter that bridges unrelated proteins or stabilizes weak protein-protein complexes in response to calcium. Acts as a negative regulator of ER-Golgi transport. The polypeptide is Peflin (Danio rerio (Zebrafish)).